The chain runs to 71 residues: Heat-stable enterotoxin A (71 aa).

Residues 1–19 (MKKIVFVLVLMLSSFGAFG) form the signal peptide. Positions 20–53 (QETVSGQFSDALSTPITAEVYKQACDPPLPPAEV) are excised as a propeptide. Intrachain disulfides connect Cys59–Cys64, Cys60–Cys68, and Cys63–Cys71.

This sequence belongs to the heat-stable enterotoxin family.

It is found in the secreted. In terms of biological role, toxin which activates the particulate form of guanylate cyclase and increases cyclic GMP levels within the host intestinal epithelial cells. This Yersinia enterocolitica protein is Heat-stable enterotoxin A (ystA).